A 64-amino-acid polypeptide reads, in one-letter code: Small cysteine-rich protein (64 aa).

Residues F1 to T17 form the signal peptide. Positions P18–E19 are excised as a propeptide.

In terms of processing, contains 4 disulfide bonds.

It localises to the secreted. The protein resides in the nematocyst. This chain is Small cysteine-rich protein, found in Anemonia viridis (Snakelocks anemone).